The sequence spans 35 residues: Augerpeptide hheTx5 (35 aa).

Post-translationally, contains 4 disulfide bonds. In terms of tissue distribution, expressed by the venom duct.

The protein resides in the secreted. This Hastula hectica (Sea snail) protein is Augerpeptide hheTx5.